The primary structure comprises 558 residues: Nuclear speckle splicing regulatory protein 1 (558 aa).

Residues 21 to 54 (PVLQKPSVFGNDSDDDDETSVSESLQREAAKKQA) are disordered. Residues S27 and S33 each carry the phosphoserine modification. Residues 104-170 (IHNLLKAVEI…REKRAAALEA (67 aa)) adopt a coiled-coil conformation. The segment at 106–170 (NLLKAVEIRK…REKRAAALEA (65 aa)) is necessary for alternative splicing activity. Residues K199 and K210 each participate in a glycyl lysine isopeptide (Lys-Gly) (interchain with G-Cter in SUMO2) cross-link. The span at 204-215 (EARSGIKEEKSR) shows a compositional bias: basic and acidic residues. Positions 204-534 (EARSGIKEEK…KRNNEETVMS (331 aa)) are disordered. The span at 216–226 (GFSNEVSSKNR) shows a compositional bias: polar residues. Residues S248, S254, and S255 each carry the phosphoserine modification. A compositionally biased stretch (basic and acidic residues) spans 250–280 (FDAKSSADDEIEETRVNCRREKVIETPENDF). T275 bears the Phosphothreonine mark. Residue K281 forms a Glycyl lysine isopeptide (Lys-Gly) (interchain with G-Cter in SUMO2) linkage. The span at 299–310 (STRHHTKGSRTS) shows a compositional bias: basic residues. Composition is skewed to basic and acidic residues over residues 311–442 (RGHE…KREV), 449–487 (RNQD…RNQE), and 501–517 (RLTE…ERPP). Residues 379–427 (KREKDREKYSQREQERDRQQNDQNRPSEKGEKEEKSKAKEEHMKVRKER) adopt a coiled-coil conformation. S457 carries the phosphoserine modification.

Belongs to the NSRP1 family. As to quaternary structure, interacts (via C-terminus) with SRSF1. Interacts (via C-terminus) with SRSF2. Expressed in dendritic cells, T-cells, B-cells and natural killer cells. Expressed in secondary lymphoid organs such as spleen and mesenteric, axillary and brachial lymph nodes.

The protein localises to the nucleus. Its subcellular location is the nucleus speckle. Functionally, RNA-binding protein that mediates pre-mRNA alternative splicing regulation. In Homo sapiens (Human), this protein is Nuclear speckle splicing regulatory protein 1 (NSRP1).